A 273-amino-acid polypeptide reads, in one-letter code: 2,3,4,5-tetrahydropyridine-2,6-dicarboxylate N-succinyltransferase (273 aa).

It belongs to the transferase hexapeptide repeat family.

The protein localises to the cytoplasm. It catalyses the reaction (S)-2,3,4,5-tetrahydrodipicolinate + succinyl-CoA + H2O = (S)-2-succinylamino-6-oxoheptanedioate + CoA. It functions in the pathway amino-acid biosynthesis; L-lysine biosynthesis via DAP pathway; LL-2,6-diaminopimelate from (S)-tetrahydrodipicolinate (succinylase route): step 1/3. The sequence is that of 2,3,4,5-tetrahydropyridine-2,6-dicarboxylate N-succinyltransferase from Acinetobacter baumannii (strain SDF).